The following is an 877-amino-acid chain: Alanine--tRNA ligase (877 aa).

Residues His-567, His-571, Cys-669, and His-673 each coordinate Zn(2+).

Belongs to the class-II aminoacyl-tRNA synthetase family. Zn(2+) serves as cofactor.

The protein localises to the cytoplasm. It carries out the reaction tRNA(Ala) + L-alanine + ATP = L-alanyl-tRNA(Ala) + AMP + diphosphate. In terms of biological role, catalyzes the attachment of alanine to tRNA(Ala) in a two-step reaction: alanine is first activated by ATP to form Ala-AMP and then transferred to the acceptor end of tRNA(Ala). Also edits incorrectly charged Ser-tRNA(Ala) and Gly-tRNA(Ala) via its editing domain. The sequence is that of Alanine--tRNA ligase from Rickettsia rickettsii (strain Iowa).